We begin with the raw amino-acid sequence, 224 residues long: Orotate phosphoribosyltransferase (224 aa).

5-phospho-alpha-D-ribose 1-diphosphate contacts are provided by residues lysine 26, 73–74, arginine 100, lysine 101, lysine 104, histidine 106, and 127–135; these read YK and EDVTTSGKS. Residues threonine 131 and arginine 160 each coordinate orotate.

The protein belongs to the purine/pyrimidine phosphoribosyltransferase family. PyrE subfamily. In terms of assembly, homodimer. The cofactor is Mg(2+).

The catalysed reaction is orotidine 5'-phosphate + diphosphate = orotate + 5-phospho-alpha-D-ribose 1-diphosphate. Its pathway is pyrimidine metabolism; UMP biosynthesis via de novo pathway; UMP from orotate: step 1/2. Its function is as follows. Catalyzes the transfer of a ribosyl phosphate group from 5-phosphoribose 1-diphosphate to orotate, leading to the formation of orotidine monophosphate (OMP). In Clostridium botulinum (strain Eklund 17B / Type B), this protein is Orotate phosphoribosyltransferase.